A 1012-amino-acid chain; its full sequence is Ankyrin repeat- and BTB/POZ domain-containing protein 3-B (1012 aa).

Residues 160–180 (ILSWTISVNCIAASLSALSMY) traverse the membrane as a helical segment. 3 ANK repeats span residues 511–540 (QGMT…DINS), 557–586 (RQAT…NVEG), and 595–624 (YTET…DPMI). One can recognise a BTB domain in the interval 831–897 (SDVTFLVEGK…LYCGGTDALH (67 aa)).

It is found in the membrane. This chain is Ankyrin repeat- and BTB/POZ domain-containing protein 3-B (abtb3b), found in Danio rerio (Zebrafish).